A 245-amino-acid chain; its full sequence is Putative insertion sequence ATP-binding protein y4pL (245 aa).

106–113 (GPSGVGKS) provides a ligand contact to ATP.

It belongs to the IS21/IS1162 putative ATP-binding protein family.

This is Putative insertion sequence ATP-binding protein y4pL from Sinorhizobium fredii (strain NBRC 101917 / NGR234).